The chain runs to 477 residues: Cytochrome P450 708A2 (477 aa).

A helical transmembrane segment spans residues phenylalanine 3–leucine 23. Cysteine 426 is a binding site for heme.

This sequence belongs to the cytochrome P450 family. Heme is required as a cofactor. As to expression, expressed primarily in the root epidermis.

The protein resides in the membrane. Hydroxylates thalianol into thalian-diol. This chain is Cytochrome P450 708A2 (CYP708A2), found in Arabidopsis thaliana (Mouse-ear cress).